The chain runs to 366 residues: Dihydroorotate dehydrogenase (quinone) (366 aa).

FMN-binding positions include 74–78 (AGFDK) and T98. K78 serves as a coordination point for substrate. Substrate is bound at residue 123–127 (NRMGF). Residues N156 and N189 each contribute to the FMN site. N189 lines the substrate pocket. The active-site Nucleophile is the S192. Residue N194 participates in substrate binding. 2 residues coordinate FMN: K231 and T259. 260 to 261 (NT) lines the substrate pocket. Residues G285, G314, and 335–336 (YT) each bind FMN.

It belongs to the dihydroorotate dehydrogenase family. Type 2 subfamily. Monomer. It depends on FMN as a cofactor.

The protein localises to the cell membrane. It carries out the reaction (S)-dihydroorotate + a quinone = orotate + a quinol. It participates in pyrimidine metabolism; UMP biosynthesis via de novo pathway; orotate from (S)-dihydroorotate (quinone route): step 1/1. Functionally, catalyzes the conversion of dihydroorotate to orotate with quinone as electron acceptor. The protein is Dihydroorotate dehydrogenase (quinone) of Kineococcus radiotolerans (strain ATCC BAA-149 / DSM 14245 / SRS30216).